The sequence spans 427 residues: U1 small nuclear ribonucleoprotein 70 kDa (427 aa).

2 disordered regions span residues 82–102 (EPGDPEYAPPKPEVELPSQKR) and 215–427 (RGRT…EYVR). Over residues 93–102 (PEVELPSQKR) the composition is skewed to basic and acidic residues. Residues 138–216 (KTLFVSRLNY…RRVLVDVERG (79 aa)) form the RRM domain. Over residues 227 to 241 (LGGGLGTSRVGGGEE) the composition is skewed to gly residues. 2 stretches are compositionally biased toward basic and acidic residues: residues 257 to 402 (EPSR…RYDK) and 409 to 427 (RYEREYKRSKRSESREYVR). Ser-282 carries the phosphoserine modification.

In terms of assembly, component of the spliceosome. Interacts with CYP63, U2AF35A, U2AF35B, SRZ21, RSZ22, SR34, SR45, SR45A and SCL33. In terms of processing, phosphorylated. The association and dissociation with SR45 is not affected by the phosphorylation status. As to expression, ubiquitous.

It localises to the nucleus speckle. It is found in the nucleus. The protein localises to the nucleoplasm. Its function is as follows. Mediates the splicing of pre-mRNA by binding to the loop I region of U1-snRNA. In Arabidopsis thaliana (Mouse-ear cress), this protein is U1 small nuclear ribonucleoprotein 70 kDa (RNU1).